Consider the following 368-residue polypeptide: 3-isopropylmalate dehydrogenase (368 aa).

Position 79 to 91 (79 to 91) interacts with NAD(+); sequence GPEWGTSSTVRPE. Arginine 98, arginine 108, arginine 137, and aspartate 226 together coordinate substrate. Residues aspartate 226, aspartate 251, and aspartate 255 each coordinate Mg(2+). 291–303 is an NAD(+) binding site; that stretch reads GSAPDISGKGIVN.

This sequence belongs to the isocitrate and isopropylmalate dehydrogenases family. As to quaternary structure, homodimer. The cofactor is Mg(2+). Requires Mn(2+) as cofactor.

The protein resides in the cytoplasm. It carries out the reaction (2R,3S)-3-isopropylmalate + NAD(+) = 4-methyl-2-oxopentanoate + CO2 + NADH. Its pathway is amino-acid biosynthesis; L-leucine biosynthesis; L-leucine from 3-methyl-2-oxobutanoate: step 3/4. Catalyzes the oxidation of 3-carboxy-2-hydroxy-4-methylpentanoate (3-isopropylmalate) to 3-carboxy-4-methyl-2-oxopentanoate. The product decarboxylates to 4-methyl-2 oxopentanoate. This chain is 3-isopropylmalate dehydrogenase (LEU1), found in Sordaria macrospora.